The sequence spans 345 residues: Galacturonate transporter (345 aa).

The signal sequence occupies residues 1 to 32 (MFKIKGLRWYMIGLVTIGTVLGYLTRNAIAAA). 8 helical membrane-spanning segments follow: residues 49 to 69 (YIIA…GYVL), 76 to 96 (VGYA…ALAN), 100 to 120 (GLAV…PAGL), 139 to 159 (FNVG…WAIM), 165 to 185 (MAFL…LYFY), 237 to 257 (FLAE…MFKA), 265 to 285 (IAMF…LGGY), and 304 to 324 (LVVT…LFTS).

This sequence belongs to the major facilitator superfamily. Phthalate permease family.

The protein localises to the cell inner membrane. It carries out the reaction aldehydo-D-galacturonate(out) + H(+)(out) = aldehydo-D-galacturonate(in) + H(+)(in). With respect to regulation, inhibited by cyanide and 2,4-dinitrophenol, but not by arsenate. In terms of biological role, transport of D-galacturonate. Cannot transport the dimer digalacturonic acid. Uptake is an active process. This Dickeya chrysanthemi (Pectobacterium chrysanthemi) protein is Galacturonate transporter.